The primary structure comprises 96 residues: Growth-regulated alpha protein (96 aa).

An N-terminal signal peptide occupies residues 1–24 (MIPATRSLLCAALLLLATSRLATG). 2 disulfide bridges follow: Cys-33–Cys-59 and Cys-35–Cys-75.

This sequence belongs to the intercrine alpha (chemokine CxC) family. The N-terminal processed form KC(5-72) is produced by proteolytic cleavage after secretion from bone marrow stromal cells.

Its subcellular location is the secreted. Its function is as follows. Has chemotactic activity for neutrophils. Contributes to neutrophil activation during inflammation. Hematoregulatory chemokine, which, in vitro, suppresses hematopoietic progenitor cell proliferation. KC(5-72) shows a highly enhanced hematopoietic activity. This chain is Growth-regulated alpha protein (Cxcl1), found in Mus musculus (Mouse).